The chain runs to 233 residues: Protein lin-7 homolog A (233 aa).

Residues 25-80 enclose the L27 domain; the sequence is LDRDVARAIELLEKLQESGEVPVHKLQSLKKVLQSEFCTAIREVYQYMHETITVNG. The 83-residue stretch at 108 to 190 folds into the PDZ domain; that stretch reads VVELPKTDEG…SVKLVVRYTP (83 aa).

It belongs to the lin-7 family. As to quaternary structure, forms a complex with CASK and CASKIN1. Component of the brain-specific heterotrimeric complex (LIN-10-LIN-2-LIN-7 complex) composed of at least APBA1, CASK, and LIN7, which associates with the motor protein KIF17 to transport vesicles along microtubules. Can also interact with other modular proteins containing protein-protein interaction domains like PALS1, PALS2, MPP7, DLG1, DLG2 and DLG3 through its L27 domain. Interacts with DLG4, GRIN2B and MARCHF11 as well as CDH1 and CTNNB1, the channels KCNJ12/Kir2.2, KCNJ4/Kir2.3 and probably KCNJ2/Kir2.1 and SLC6A12/BGT-1 via its PDZ domain. The association of LIN7A with cadherin and beta-catenin is calcium-dependent, occurs at synaptic junctions and requires the actin cytoskeleton. Interacts with EGFR, ERBB2, ERBB3 and ERBB4 with both PDZ and KID domains. Associates with KIF17 via APBA1. Interacts with HTR4. Forms a tripartite complex composed of DLG1, MPP7 and LIN7 (LIN7A or LIN7C).

It is found in the cell membrane. The protein resides in the basolateral cell membrane. The protein localises to the cell junction. Its subcellular location is the postsynaptic density membrane. It localises to the tight junction. Plays a role in establishing and maintaining the asymmetric distribution of channels and receptors at the plasma membrane of polarized cells. Forms membrane-associated multiprotein complexes that may regulate delivery and recycling of proteins to the correct membrane domains. The tripartite complex composed of LIN7 (LIN7A, LIN7B or LIN7C), CASK and APBA1 associates with the motor protein KIF17 to transport vesicles containing N-methyl-D-aspartate (NMDA) receptor subunit NR2B along microtubules. This complex may have the potential to couple synaptic vesicle exocytosis to cell adhesion in brain. Ensures the proper localization of GRIN2B (subunit 2B of the NMDA receptor) to neuronal postsynaptic density and may function in localizing synaptic vesicles at synapses where it is recruited by beta-catenin and cadherin. Required to localize Kir2 channels, GABA transporter (SLC6A12) and EGFR/ERBB1, ERBB2, ERBB3 and ERBB4 to the basolateral membrane of epithelial cells. The protein is Protein lin-7 homolog A (LIN7A) of Bos taurus (Bovine).